Reading from the N-terminus, the 364-residue chain is Suberization-associated anionic peroxidase 1 (364 aa).

Residues 1–25 form the signal peptide; it reads MGFRLSHLSLALSFVALALAGVAIY. Asparagine 36 carries an N-linked (GlcNAc...) asparagine glycan. Intrachain disulfides connect cysteine 81–cysteine 160 and cysteine 112–cysteine 117. The Proton acceptor role is filled by histidine 110. Ca(2+)-binding residues include aspartate 111, valine 114, glycine 116, and aspartate 118. N-linked (GlcNAc...) asparagine glycans are attached at residues asparagine 127, asparagine 162, and asparagine 200. 2 cysteine pairs are disulfide-bonded: cysteine 167–cysteine 353 and cysteine 246–cysteine 265. Proline 209 contacts substrate. Asparagine 214 and asparagine 226 each carry an N-linked (GlcNAc...) asparagine glycan. Histidine 239 contacts heme b. Residue threonine 240 participates in Ca(2+) binding. The N-linked (GlcNAc...) asparagine glycan is linked to asparagine 264. Positions 278, 280, and 285 each coordinate Ca(2+).

Belongs to the peroxidase family. Classical plant (class III) peroxidase subfamily. Ca(2+) serves as cofactor. Heme b is required as a cofactor.

Its subcellular location is the secreted. The catalysed reaction is 2 a phenolic donor + H2O2 = 2 a phenolic radical donor + 2 H2O. In terms of biological role, removal of H(2)O(2), oxidation of toxic reductants, biosynthesis and degradation of lignin, suberization, auxin catabolism, response to environmental stresses such as wounding, pathogen attack and oxidative stress. These functions might be dependent on each isozyme/isoform in each plant tissue. Suggested to catalyze the deposition of the aromatic residues of suberin on the cell wall and thus play a role in cell-suberization. The sequence is that of Suberization-associated anionic peroxidase 1 (TAP1) from Solanum lycopersicum (Tomato).